Consider the following 45-residue polypeptide: MRNTPFVVKINVIFLKVISNTAVSVFCRDRRIRFESDWLNSYFQK.

The protein belongs to the asfivirus C62L family.

This is an uncharacterized protein from Ornithodoros (relapsing fever ticks).